The following is a 276-amino-acid chain: S-adenosylmethionine-dependent nucleotide dehydratase (276 aa).

The 211-residue stretch at 6–216 (TSVRKFRSAN…RRRHEDIGCI (211 aa)) folds into the Radical SAM core domain. Residues C22, C26, and C29 each coordinate [4Fe-4S] cluster.

This sequence belongs to the radical SAM superfamily. Viperin family. It depends on [4Fe-4S] cluster as a cofactor.

The enzyme catalyses CTP + AH2 + S-adenosyl-L-methionine = 3'-deoxy-3',4'-didehydro-CTP + 5'-deoxyadenosine + L-methionine + A + H2O + H(+). Its function is as follows. Expression of pVip50 in E.coli (strain MG1655) confers resistance to phage P1; has no effect against T7. Catalyzes the conversion of cytosine triphosphate (CTP) to 3'-deoxy-3',4'-didehydro-CTP (ddhCTP), probably via a SAM-dependent radical mechanism. The modified nucleotide represses transcription from T7 RNA polymerase-directed genes (possibly by acting as chain terminators), strongly suggesting these nucleotides block viral polymerase transcription. How this protein allows bacteria to resist viruses that do not encode their own RNA polymerase (such as lambda, P1) is unknown. This chain is S-adenosylmethionine-dependent nucleotide dehydratase, found in Thermoplasmatales archaeon (strain ISO4-H5).